The chain runs to 1389 residues: DNA-directed RNA polymerase subunit beta'' (1389 aa).

The Zn(2+) site is built by Cys-224, Cys-295, Cys-302, and Cys-305.

The protein belongs to the RNA polymerase beta' chain family. RpoC2 subfamily. As to quaternary structure, in plastids the minimal PEP RNA polymerase catalytic core is composed of four subunits: alpha, beta, beta', and beta''. When a (nuclear-encoded) sigma factor is associated with the core the holoenzyme is formed, which can initiate transcription. Zn(2+) serves as cofactor.

The protein localises to the plastid. It localises to the chloroplast. The catalysed reaction is RNA(n) + a ribonucleoside 5'-triphosphate = RNA(n+1) + diphosphate. Its function is as follows. DNA-dependent RNA polymerase catalyzes the transcription of DNA into RNA using the four ribonucleoside triphosphates as substrates. This is DNA-directed RNA polymerase subunit beta'' from Atropa belladonna (Belladonna).